Here is a 150-residue protein sequence, read N- to C-terminus: Large ribosomal subunit protein bL9 (150 aa).

The protein belongs to the bacterial ribosomal protein bL9 family.

In terms of biological role, binds to the 23S rRNA. In Photorhabdus laumondii subsp. laumondii (strain DSM 15139 / CIP 105565 / TT01) (Photorhabdus luminescens subsp. laumondii), this protein is Large ribosomal subunit protein bL9.